A 161-amino-acid chain; its full sequence is MKNKAIYPGTFDPITYGHIDILTRAAGMFDTVLLAIAASARKNPMFSLEERVALAKEVTQHLPNVEVVGFCELMANFAKKQQATILIRGVRSVSDFEYEWQLANMNRHFAPDLDSVFLLPSQNLSFVSSSLIKDVARHDGDVSTFLPEVVATAMLQKLGKR.

Thr10 contributes to the substrate binding site. ATP-binding positions include 10–11 (TF) and His18. Lys42, Met74, and Arg88 together coordinate substrate. ATP is bound by residues 89–91 (GVR), Glu99, and 124–130 (LSFVSSS).

This sequence belongs to the bacterial CoaD family. As to quaternary structure, homohexamer. The cofactor is Mg(2+).

Its subcellular location is the cytoplasm. The enzyme catalyses (R)-4'-phosphopantetheine + ATP + H(+) = 3'-dephospho-CoA + diphosphate. It functions in the pathway cofactor biosynthesis; coenzyme A biosynthesis; CoA from (R)-pantothenate: step 4/5. Functionally, reversibly transfers an adenylyl group from ATP to 4'-phosphopantetheine, yielding dephospho-CoA (dPCoA) and pyrophosphate. The sequence is that of Phosphopantetheine adenylyltransferase from Proteus mirabilis (strain HI4320).